A 127-amino-acid polypeptide reads, in one-letter code: Large ribosomal subunit protein bL21 (127 aa).

The protein belongs to the bacterial ribosomal protein bL21 family. In terms of assembly, part of the 50S ribosomal subunit. Contacts protein L20.

Its function is as follows. This protein binds to 23S rRNA in the presence of protein L20. The sequence is that of Large ribosomal subunit protein bL21 from Synechococcus sp. (strain ATCC 27144 / PCC 6301 / SAUG 1402/1) (Anacystis nidulans).